We begin with the raw amino-acid sequence, 487 residues long: Benzaldehyde dehydrogenase [NAD(+)] (487 aa).

232-237 (GSTQVG) contacts NAD(+). Catalysis depends on residues glutamate 254 and cysteine 288.

The protein belongs to the aldehyde dehydrogenase family. As to quaternary structure, homotetramer.

The catalysed reaction is benzaldehyde + NAD(+) + H2O = benzoate + NADH + 2 H(+). The protein is Benzaldehyde dehydrogenase [NAD(+)] (xylC) of Pseudomonas putida (Arthrobacter siderocapsulatus).